Reading from the N-terminus, the 196-residue chain is MILPIIAYGDPVLKKKAKDIDKDYPKLEELINNMWDTMYNAYGVGLAAPQVGLPVRMFMIDPAPFADDEELDEAEKKVLMDLRKVFINPQIIEETGEEWAFSEGCLSIPEVREDVFRQPDITIEYHDENWEKHTETYSGLAARVIQHEYDHIEGILFTDKLSSLKKRLIKSKLANISKGKINVEYKMRFPNAKKAR.

Fe cation-binding residues include C105 and H147. The active site involves E148. Residue H151 participates in Fe cation binding.

The protein belongs to the polypeptide deformylase family. Fe(2+) serves as cofactor.

It carries out the reaction N-terminal N-formyl-L-methionyl-[peptide] + H2O = N-terminal L-methionyl-[peptide] + formate. Its function is as follows. Removes the formyl group from the N-terminal Met of newly synthesized proteins. Requires at least a dipeptide for an efficient rate of reaction. N-terminal L-methionine is a prerequisite for activity but the enzyme has broad specificity at other positions. This Christiangramia forsetii (strain DSM 17595 / CGMCC 1.15422 / KT0803) (Gramella forsetii) protein is Peptide deformylase.